We begin with the raw amino-acid sequence, 401 residues long: Formate-dependent phosphoribosylglycinamide formyltransferase (401 aa).

Residues 22-23 (EL) and Glu-82 each bind N(1)-(5-phospho-beta-D-ribosyl)glycinamide. ATP is bound by residues Arg-115, Lys-157, 162–167 (SSGKGQ), 197–200 (EGFI), and Glu-205. An ATP-grasp domain is found at 120–315 (RLAAESLGLP…EFELHARAIL (196 aa)). The Mg(2+) site is built by Glu-274 and Glu-286. N(1)-(5-phospho-beta-D-ribosyl)glycinamide contacts are provided by residues Asp-293, Lys-362, and 369–370 (RR).

It belongs to the PurK/PurT family. As to quaternary structure, homodimer.

The enzyme catalyses N(1)-(5-phospho-beta-D-ribosyl)glycinamide + formate + ATP = N(2)-formyl-N(1)-(5-phospho-beta-D-ribosyl)glycinamide + ADP + phosphate + H(+). It participates in purine metabolism; IMP biosynthesis via de novo pathway; N(2)-formyl-N(1)-(5-phospho-D-ribosyl)glycinamide from N(1)-(5-phospho-D-ribosyl)glycinamide (formate route): step 1/1. Functionally, involved in the de novo purine biosynthesis. Catalyzes the transfer of formate to 5-phospho-ribosyl-glycinamide (GAR), producing 5-phospho-ribosyl-N-formylglycinamide (FGAR). Formate is provided by PurU via hydrolysis of 10-formyl-tetrahydrofolate. This Cupriavidus taiwanensis (strain DSM 17343 / BCRC 17206 / CCUG 44338 / CIP 107171 / LMG 19424 / R1) (Ralstonia taiwanensis (strain LMG 19424)) protein is Formate-dependent phosphoribosylglycinamide formyltransferase.